We begin with the raw amino-acid sequence, 383 residues long: MSKQDYYKTLGVTQSSDEREIKRAYKKLAMKYHPDRNPGNKNSEEKFKTIKEAYEILIDPKKRTAYDQYGHSAFEQGNSTGNNNTFTHSFSSNSDFSDIFGDVFGDIFGGTRKQKSERQGSDLRYDMTLTLEEAVRGTIKEIKIPTLQKCPTCYGYGTKTGTKPQFCPTCRGNGQIQMRKGFFTVQQTCPQCHGEGNFIRDPCRRCHGNGRIEISKTLSVKVPPGVDTNDKIRLNNEGEAGENGAMAGNLYVQINVKKHPIFEREENNLYCEVPISFSMAALGGEIEVPTLDGKVKLKIPCETQSGKLLRIRGRGVKSIRNNNRQGDLLCRIIVETPVNLNDLQKDLLYKLGESFNGFKGEKNSPKSKRFFEGVKRFFDDLTR.

A J domain is found at Asp5–Gly70. The CR-type zinc-finger motif lies at Gly137 to Ser215. 8 residues coordinate Zn(2+): Cys150, Cys153, Cys167, Cys170, Cys189, Cys192, Cys203, and Cys206. 4 CXXCXGXG motif repeats span residues Cys150–Gly157, Cys167–Gly174, Cys189–Gly196, and Cys203–Gly210.

This sequence belongs to the DnaJ family. In terms of assembly, homodimer. Zn(2+) serves as cofactor.

It localises to the cytoplasm. Participates actively in the response to hyperosmotic and heat shock by preventing the aggregation of stress-denatured proteins and by disaggregating proteins, also in an autonomous, DnaK-independent fashion. Unfolded proteins bind initially to DnaJ; upon interaction with the DnaJ-bound protein, DnaK hydrolyzes its bound ATP, resulting in the formation of a stable complex. GrpE releases ADP from DnaK; ATP binding to DnaK triggers the release of the substrate protein, thus completing the reaction cycle. Several rounds of ATP-dependent interactions between DnaJ, DnaK and GrpE are required for fully efficient folding. Also involved, together with DnaK and GrpE, in the DNA replication of plasmids through activation of initiation proteins. The polypeptide is Chaperone protein DnaJ (Buchnera aphidicola subsp. Baizongia pistaciae (strain Bp)).